The following is a 357-amino-acid chain: Fructose-bisphosphate aldolase, cytoplasmic isozyme (357 aa).

Substrate contacts are provided by Arg-53 and Lys-142. Catalysis depends on Glu-183, which acts as the Proton acceptor. Lys-225 acts as the Schiff-base intermediate with dihydroxyacetone-P in catalysis.

Belongs to the class I fructose-bisphosphate aldolase family.

It localises to the cytoplasm. The enzyme catalyses beta-D-fructose 1,6-bisphosphate = D-glyceraldehyde 3-phosphate + dihydroxyacetone phosphate. Its pathway is carbohydrate degradation; glycolysis; D-glyceraldehyde 3-phosphate and glycerone phosphate from D-glucose: step 4/4. In Spinacia oleracea (Spinach), this protein is Fructose-bisphosphate aldolase, cytoplasmic isozyme.